The primary structure comprises 258 residues: Transmembrane O-methyltransferase homolog (258 aa).

Residues E104, 106-107, S112, E130, and S160 contribute to the S-adenosyl-L-methionine site; that span reads GT.

The protein belongs to the class I-like SAM-binding methyltransferase superfamily. Cation-dependent O-methyltransferase family. Interacts with LHFPL5, PCDH15, TMC1, TMC2 and TMIE. Interacts directly with TMC1. The interaction of TOMT with TMC1 and TMC2 is required for the transportation of TMC1/2 into the stereocilia of hair cells.

Its subcellular location is the cytoplasm. It localises to the endoplasmic reticulum. It catalyses the reaction a catechol + S-adenosyl-L-methionine = a guaiacol + S-adenosyl-L-homocysteine + H(+). Functionally, catalyzes the O-methylation, and thereby the inactivation, of catecholamine neurotransmitters and catechol hormones. Required for auditory function. Component of the cochlear hair cell's mechanotransduction (MET) machinery. Involved in the assembly of the asymmetric tip-link MET complex. Required for transportation of TMC1 and TMC2 proteins into the mechanically sensitive stereocilia of the hair cells. The function in MET is independent of the enzymatic activity. In Rattus norvegicus (Rat), this protein is Transmembrane O-methyltransferase homolog.